Consider the following 1465-residue polypeptide: Vacuolar heme ABC transmembrane exporter abc3 (1465 aa).

The Extracellular portion of the chain corresponds to 1 to 8 (MITANKGL). A helical membrane pass occupies residues 9–29 (SLVLLIPNLFALVSGGLQYVF). Over 30–42 (DVRRRIFRPHFSQ) the chain is Cytoplasmic. Residues 43–63 (FWTIWMKFFSIALVIITQIYV) form a helical membrane-spanning segment. Over 64–69 (GYKTKN) the chain is Extracellular. Residues 70–90 (IGWNFFSVVTYCFVLFLQFAE) form a helical membrane-spanning segment. Residues 91 to 97 (QSTLRVP) lie on the Cytoplasmic side of the membrane. The chain crosses the membrane as a helical span at residues 98-118 (MASLLIFWLLKVVTSLLILLF). At 119–129 (SPYIAITSMAR) the chain is on the extracellular side. Residues 130–150 (LLTLITLFCSLVCFISEVYVP) traverse the membrane as a helical segment. 151-152 (PC) contacts heme. At 151-235 (PCNRVWYSDD…IYHSKNKRRS (85 aa)) the chain is on the cytoplasmic side. A helical membrane pass occupies residues 236–256 (LFLWKLLFFNHWKLVALITIT). The ABC transmembrane type-1 1 domain occupies 250–539 (VALITITKLI…LPTVISSLLE (290 aa)). The Extracellular segment spans residues 257 to 291 (KLIQDVLAFVQPTLIQKTILFISSYTSPNPESPSR). A helical membrane pass occupies residues 292–312 (GFIIAILVLVANFLQTLLLQQ). Residues 313–362 (YNQLIMLLGMRWKTELLASIYRKSLLLSSSARQNRSIGDIINYMAVDTQK) lie on the Cytoplasmic side of the membrane. Residues 363–383 (ISDLPIYLFIIVSGPFQIALA) traverse the membrane as a helical segment. Residues 384–394 (LSNLYHLMGYS) lie on the Extracellular side of the membrane. The chain crosses the membrane as a helical span at residues 395-415 (AFTGVAASVILFPCNIIVANV). The Cytoplasmic segment spans residues 416–480 (YKKFQSILMK…KIGFITAIGD (65 aa)). A helical transmembrane segment spans residues 481–501 (FAWIFTTIIVTTVAFGAFIIF). The Extracellular portion of the chain corresponds to 502 to 511 (HGKTQALTAD). Residues 512–532 (IVFPAVSLFNLLQFPLAMLPT) form a helical membrane-spanning segment. Residues 533–899 (VISSLLEASV…VYWMYFKSCS (367 aa)) are Cytoplasmic-facing. In terms of domain architecture, ABC transporter 1 spans 575–804 (LEIKSGTFSW…TNSELKQQLS (230 aa)). 614–621 (GKVGAGKS) is a binding site for ATP. Disordered regions lie at residues 805–824 (EFNDEKDTQPLPEHTTSYPS) and 840–869 (TYSSSERKDSSNKYKSRKRNPIRQKVTEDD). The chain crosses the membrane as a helical span at residues 900–920 (IGLILLYFFFIISGIMMNVAT). An ABC transmembrane type-1 2 domain is found at 903 to 1189 (ILLYFFFIIS…IVQQSVDAEN (287 aa)). The Extracellular portion of the chain corresponds to 921-939 (NVWLKHWSEENGKSSSELN). A helical membrane pass occupies residues 940–960 (PSPYFYLGIYLFFGFLSCAFI). Residues 961–1033 (SSSSLTMTVL…FFFRNSIQVL (73 aa)) lie on the Cytoplasmic side of the membrane. Residues 1034-1054 (FILGVICYSAPLSLLLIVPLF) form a helical membrane-spanning segment. Over 1055–1465 (FLYLYNRAYY…YSLAKESGLI (411 aa)) the chain is Extracellular. Residues 1226–1460 (VSFNHYSAKY…KDSMFYSLAK (235 aa)) form the ABC transporter 2 domain. 1260-1267 (GRTGAGKS) lines the ATP pocket.

This sequence belongs to the ABC transporter superfamily.

Its subcellular location is the vacuole membrane. In terms of biological role, iron-regulated vacuolar transporter that mobilizes stored heme from the vacuole to the cytosol in response to iron deficiency. This Schizosaccharomyces pombe (strain 972 / ATCC 24843) (Fission yeast) protein is Vacuolar heme ABC transmembrane exporter abc3.